The chain runs to 165 residues: MVKSIWVAGGCFWGIQKYFDSIKGVRHTIVGYSQGNVINPSYEQVCTQTTNHTETVQVDYDDRFVSLTSILEHLYQIIDPFSLNKQGEDIGNQYRSGIYYVDHEDALIIKNFLLQKQNQTSKKIMIEVHKLHNFNIAEEYHQKYLDKNPNGYCHVNLSLSKKRFN.

Residue Cys11 is part of the active site.

It belongs to the MsrA Met sulfoxide reductase family.

The catalysed reaction is L-methionyl-[protein] + [thioredoxin]-disulfide + H2O = L-methionyl-(S)-S-oxide-[protein] + [thioredoxin]-dithiol. It catalyses the reaction [thioredoxin]-disulfide + L-methionine + H2O = L-methionine (S)-S-oxide + [thioredoxin]-dithiol. Has an important function as a repair enzyme for proteins that have been inactivated by oxidation. Catalyzes the reversible oxidation-reduction of methionine sulfoxide in proteins to methionine. This Ureaplasma urealyticum serovar 10 (strain ATCC 33699 / Western) protein is Peptide methionine sulfoxide reductase MsrA.